We begin with the raw amino-acid sequence, 61 residues long: Small ribosomal subunit protein uS14 (61 aa).

Cysteine 24, cysteine 27, cysteine 40, and cysteine 43 together coordinate Zn(2+).

The protein belongs to the universal ribosomal protein uS14 family. Zinc-binding uS14 subfamily. As to quaternary structure, part of the 30S ribosomal subunit. Contacts proteins S3 and S10. Requires Zn(2+) as cofactor.

Binds 16S rRNA, required for the assembly of 30S particles and may also be responsible for determining the conformation of the 16S rRNA at the A site. In Syntrophobacter fumaroxidans (strain DSM 10017 / MPOB), this protein is Small ribosomal subunit protein uS14.